The sequence spans 377 residues: Glutamate 5-kinase (377 aa).

Residue Lys20 participates in ATP binding. Residues Ser59, Asp146, and Asn158 each contribute to the substrate site. ATP is bound by residues 178–179 (SD) and 220–226 (TGGMSTK). In terms of domain architecture, PUA spans 285-363 (RGTLTVDAGA…ADIEAVLGYR (79 aa)).

It belongs to the glutamate 5-kinase family.

Its subcellular location is the cytoplasm. It catalyses the reaction L-glutamate + ATP = L-glutamyl 5-phosphate + ADP. The protein operates within amino-acid biosynthesis; L-proline biosynthesis; L-glutamate 5-semialdehyde from L-glutamate: step 1/2. Its function is as follows. Catalyzes the transfer of a phosphate group to glutamate to form L-glutamate 5-phosphate. This Myxococcus xanthus (strain DK1622) protein is Glutamate 5-kinase.